Consider the following 123-residue polypeptide: Small ribosomal subunit protein uS13 (123 aa).

Residues 92-123 are disordered; that stretch reads RKGLPVRGQKTKTNARTRKGPKKLVGAKKKSK.

The protein belongs to the universal ribosomal protein uS13 family. In terms of assembly, part of the 30S ribosomal subunit. Forms a loose heterodimer with protein S19. Forms two bridges to the 50S subunit in the 70S ribosome.

Located at the top of the head of the 30S subunit, it contacts several helices of the 16S rRNA. In the 70S ribosome it contacts the 23S rRNA (bridge B1a) and protein L5 of the 50S subunit (bridge B1b), connecting the 2 subunits; these bridges are implicated in subunit movement. Contacts the tRNAs in the A and P-sites. This is Small ribosomal subunit protein uS13 from Clostridium kluyveri (strain NBRC 12016).